The chain runs to 209 residues: Lysine-rich arabinogalactan protein 18 (209 aa).

Positions 1–21 (MDRNFLLTVTLICIVVAGVGG) are cleaved as a signal peptide. The segment at 21 to 185 (GQSPISSPTK…PSADDQSGAA (165 aa)) is disordered. The span at 23–79 (SPISSPTKSPTTPSAPTTSPTKSPAVTSPTTAPAKTPTASASSPVESPKSPAPVSES) shows a compositional bias: low complexity. Composition is skewed to pro residues over residues 80–95 (SPPP…PVPA) and 103–119 (SSPP…PAPV). Over residues 132–145 (SKHKKTTKKSKKHQ) the composition is skewed to basic residues. A compositionally biased stretch (pro residues) spans 149–164 (APAPELLGPPAPPTES). Gly-183 carries GPI-anchor amidated glycine lipidation. Residues 184-209 (AASTRVLRNVAVGAVATAWAVLVMAF) constitute a propeptide, removed in mature form.

It belongs to the lysine-rich AGP family. Post-translationally, O-glycosylated on the hydroxyproline residues. Predominantly expressed in flowers, and moderately expressed in roots, stems and young leaves.

The protein resides in the cell membrane. In terms of biological role, proteoglycan that seems to be implicated in diverse developmental roles such as differentiation, cell-cell recognition, embryogenesis and programmed cell death. This Arabidopsis thaliana (Mouse-ear cress) protein is Lysine-rich arabinogalactan protein 18 (AGP18).